The following is a 243-amino-acid chain: Carboxy-S-adenosyl-L-methionine synthase (243 aa).

S-adenosyl-L-methionine is bound by residues Y40, G65–S67, D90–N91, D118–I119, N133, and R200.

The protein belongs to the class I-like SAM-binding methyltransferase superfamily. Cx-SAM synthase family. As to quaternary structure, homodimer.

It carries out the reaction prephenate + S-adenosyl-L-methionine = carboxy-S-adenosyl-L-methionine + 3-phenylpyruvate + H2O. Its function is as follows. Catalyzes the conversion of S-adenosyl-L-methionine (SAM) to carboxy-S-adenosyl-L-methionine (Cx-SAM). The protein is Carboxy-S-adenosyl-L-methionine synthase of Shewanella sp. (strain ANA-3).